The following is a 51-amino-acid chain: uncharacterized protein (51 aa).

Positions 1–51 (MKRKAEVNEAIKNNNTPTESMDPNSYKTQYHDDPNFRGANRNSKQGQQGGM) are disordered. Polar residues-rich tracts occupy residues 11 to 28 (IKNNNTPTESMDPNSYKT) and 40 to 51 (NRNSKQGQQGGM).

This is an uncharacterized protein from Bacillus subtilis (strain 168).